Consider the following 303-residue polypeptide: MSVTVTPYDSIPFPDELVALAERSRAADGEPPFSDQTLVDIRSGRAGATCVAATDGDELVGAAVVVPQQDAASTFTVELTVAPGHRDQGVATAIAGQLRAMVDGTVEAWAHGDQPASRRLAELYGLTAVRDLLQLKRTVSGAQDIPLEVSLPQGVRIRPFEVGRDEQAWLHVNSRAFAQHPEQGRITLGDLQEREGQSWFDPRGFLLAVSEQDPDRVLGFHWTKVHPGSGDSPALGEVYAVGVDPEQQGSGLGRALTAAGINHLAQEGLCEVMLYVDADNSAAMALYESLGFERWHVDVMYRS.

N-acetyltransferase domains lie at 3–152 (VTVT…VSLP) and 155–303 (VRIR…MYRS). 1D-myo-inositol 2-(L-cysteinylamino)-2-deoxy-alpha-D-glucopyranoside is bound at residue Asp35. Residue 79–81 (LTV) participates in acetyl-CoA binding. 1D-myo-inositol 2-(L-cysteinylamino)-2-deoxy-alpha-D-glucopyranoside is bound by residues Glu182, Lys224, and Glu237. Acetyl-CoA-binding positions include 241-243 (VGV) and 248-254 (QGSGLGR). Tyr275 is a 1D-myo-inositol 2-(L-cysteinylamino)-2-deoxy-alpha-D-glucopyranoside binding site.

This sequence belongs to the acetyltransferase family. MshD subfamily. In terms of assembly, monomer.

The catalysed reaction is 1D-myo-inositol 2-(L-cysteinylamino)-2-deoxy-alpha-D-glucopyranoside + acetyl-CoA = mycothiol + CoA + H(+). Functionally, catalyzes the transfer of acetyl from acetyl-CoA to desacetylmycothiol (Cys-GlcN-Ins) to form mycothiol. This is Mycothiol acetyltransferase from Kocuria rhizophila (strain ATCC 9341 / DSM 348 / NBRC 103217 / DC2201).